Reading from the N-terminus, the 871-residue chain is Major vault protein (871 aa).

MVP repeat units lie at residues 2–69, 70–124, 125–177, 178–230, 231–285, 286–336, 337–407, 408–482, and 483–545; these read SKRP…VPPR, HYCV…EVTP, LQIV…EIIK, ATVI…DIVN, AFIL…GVVD, VTTL…IQDV, YVLS…RRQA, IPLD…KTMV, and VSYR…LLGP. The tract at residues 356-381 is disordered; the sequence is TEAQEEDEEEEEEEEQAKKTSVQRRP. Acidic residues predominate over residues 357 to 370; that stretch reads EAQEEDEEEEEEEE. Positions 684 to 710 are disordered; that stretch reads QEATARHEAERLEQEARGKLERQKITD. Residues 687–710 show a composition bias toward basic and acidic residues; it reads TARHEAERLEQEARGKLERQKITD. One can recognise an IQ domain in the interval 688-717; the sequence is ARHEAERLEQEARGKLERQKITDQAEAERA.

The vault ribonucleoprotein particle is a huge (400 A x 670 A) cage structure of 12.9 MDa. It consists of a dimer of half-vaults, with each half-vault comprising 39 identical major vault protein (MVP) chains, PARP4 and one or more vault RNAs (vRNAs).

The protein localises to the cytoplasm. It is found in the nucleus. Its function is as follows. Required for normal vault structure. Vaults are multi-subunit structures that may act as scaffolds for proteins involved in signal transduction. Vaults may also play a role in nucleo-cytoplasmic transport. The chain is Major vault protein (mvp) from Ictalurus punctatus (Channel catfish).